Here is a 177-residue protein sequence, read N- to C-terminus: Actinorhodin polyketide dimerase (177 aa).

It to S.pristinaespiralis SnaC.

The protein operates within antibiotic biosynthesis; actinorhodin biosynthesis. This is Actinorhodin polyketide dimerase (actVB) from Streptomyces coelicolor (strain ATCC BAA-471 / A3(2) / M145).